Consider the following 265-residue polypeptide: Transcription factor BHLH062 (265 aa).

The tract at residues Met-1 to Val-26 is disordered. Positions Pro-35–Arg-48 are basic motif; degenerate. In terms of domain architecture, bHLH spans Pro-35 to Leu-85. The interval Asp-49 to Leu-85 is helix-loop-helix motif. Positions Leu-75–Glu-130 form a coiled coil. The tract at residues Glu-200–Ser-265 is disordered. The span at Ser-210–Thr-220 shows a compositional bias: basic and acidic residues. Positions Gln-245–Thr-256 are enriched in polar residues.

Belongs to the bHLH protein family. As to quaternary structure, interacts with TIFY11A/JAZ9.

The protein localises to the nucleus. Functionally, transcription factor that plays a positive role in salt stress tolerance. Interacts with TIFY11A/JAZ9 and binds to the promoter of some potassium ion transporter genes to regulate potassium homeostasis during salt stress. This Oryza sativa subsp. japonica (Rice) protein is Transcription factor BHLH062.